Reading from the N-terminus, the 57-residue chain is Protein CgkB (57 aa).

In Pseudoalteromonas carrageenovora (Alteromonas carrageenovora), this protein is Protein CgkB (cgkB).